The following is a 155-amino-acid chain: MSRRGTAEEKTAKSDPIYRNRLVNMLVNRILKHGKKSLAYQIIYRAVKKIQQKTETNPLSVLRQAIRGVTPNIAVKARRVGGSTHQVPIEIGSTQGKALAIRWLLGASRKRPGRNMAFKLSSELVDAAKGSGDAIRKKEETHRMAEANRAFAHFR.

It belongs to the universal ribosomal protein uS7 family. Part of the 30S ribosomal subunit.

It localises to the plastid. Its subcellular location is the chloroplast. Functionally, one of the primary rRNA binding proteins, it binds directly to 16S rRNA where it nucleates assembly of the head domain of the 30S subunit. The polypeptide is Small ribosomal subunit protein uS7c (rps7) (Cabomba caroliniana (Carolina fanwort)).